The sequence spans 505 residues: Cytochrome c oxidase subunit 1 (505 aa).

A helical membrane pass occupies residues 14–34 (LLYLVFAFFGGLLGTSLSMLI). The Ca(2+) site is built by E37 and G42. The next 6 membrane-spanning stretches (helical) occupy residues 55-75 (VIIT…ALFG), 98-118 (NISF…TLVE), 143-163 (AILS…NMLV), 180-200 (LFVW…PVLA), 229-249 (LFWF…FGIV), and 261-281 (VFGL…GFIV). H60 serves as a coordination point for Fe(II)-heme a. The Cu cation site is built by H235 and Y239. The segment at residues 235–239 (HPEVY) is a cross-link (1'-histidyl-3'-tyrosine (His-Tyr)). Y239 serves as a coordination point for O2. The Cu cation site is built by H284 and H285. A run of 2 helical transmembrane segments spans residues 302–322 (ATMI…ATIY) and 332–352 (MWFA…GVVL). Positions 362 and 363 each coordinate Mg(2+). H370 lines the heme a3 pocket. H372 lines the Fe(II)-heme a pocket. 3 consecutive transmembrane segments (helical) span residues 374–394 (VLSM…GNLI), 408–428 (FWLL…LGLA), and 446–466 (AVSS…ATTF).

Belongs to the heme-copper respiratory oxidase family. As to quaternary structure, component of the cytochrome c oxidase (complex IV, CIV), a multisubunit enzyme composed of a catalytic core of 3 subunits and several supernumerary subunits. The complex exists as a monomer or a dimer and forms supercomplexes (SCs) in the inner mitochondrial membrane with ubiquinol-cytochrome c oxidoreductase (cytochrome b-c1 complex, complex III, CIII). Requires heme as cofactor. The cofactor is Cu cation.

It localises to the mitochondrion inner membrane. The catalysed reaction is 4 Fe(II)-[cytochrome c] + O2 + 8 H(+)(in) = 4 Fe(III)-[cytochrome c] + 2 H2O + 4 H(+)(out). It functions in the pathway energy metabolism; oxidative phosphorylation. In terms of biological role, component of the cytochrome c oxidase, the last enzyme in the mitochondrial electron transport chain which drives oxidative phosphorylation. The respiratory chain contains 3 multisubunit complexes succinate dehydrogenase (complex II, CII), ubiquinol-cytochrome c oxidoreductase (cytochrome b-c1 complex, complex III, CIII) and cytochrome c oxidase (complex IV, CIV), that cooperate to transfer electrons derived from NADH and succinate to molecular oxygen, creating an electrochemical gradient over the inner membrane that drives transmembrane transport and the ATP synthase. Cytochrome c oxidase is the component of the respiratory chain that catalyzes the reduction of oxygen to water. Electrons originating from reduced cytochrome c in the intermembrane space (IMS) are transferred via the dinuclear copper A center (CU(A)) of subunit 2 and heme A of subunit 1 to the active site in subunit 1, a binuclear center (BNC) formed by heme A3 and copper B (CU(B)). The BNC reduces molecular oxygen to 2 water molecules using 4 electrons from cytochrome c in the IMS and 4 protons from the mitochondrial matrix. The polypeptide is Cytochrome c oxidase subunit 1 (COX1) (Chlamydomonas reinhardtii (Chlamydomonas smithii)).